The sequence spans 677 residues: MFVKLKLIFFFFLLCQIMISSSQNLNFTYNGFHPPLTDISLQGLATVTPNGLLKLTNTSVQKTGHAFCTERIRFKDSQNGNVSSFSTTFVFAIHSQIPTLSGHGIAFVVAPTLGLPFALPSQYIGLFNISNNGNDTNHIFAVEFDTIQSSEFGDPNDNHVGIDLNGLRSANYSTAGYRDDHDKFQNLSLISRKRIQVWIDYDNRSHRIDVTVAPFDSDKPRKPLVSYVRDLSSILLEDMYVGFSSATGSVLSEHFLVGWSFRLNGEAPMLSLSKLPKLPRFEPRRISEFYKIGMPLISLSLIFSIIFLAFYIVRRKKKYEEELDDWETEFGKNRFRFKELYHATKGFKEKDLLGSGGFGRVYRGILPTTKLEVAVKRVSHDSKQGMKEFVAEIVSIGRMSHRNLVPLLGYCRRRGELLLVYDYMPNGSLDKYLYNNPETTLDWKQRSTIIKGVASGLFYLHEEWEQVVIHRDVKASNVLLDADFNGRLGDFGLARLYDHGSDPQTTHVVGTLGYLAPEHSRTGRATTTTDVYAFGAFLLEVVSGRRPIEFHSASDDTFLLVEWVFSLWLRGNIMEAKDPKLGSSGYDLEEVEMVLKLGLLCSHSDPRARPSMRQVLQYLRGDMALPELTPLDLSAGSVMNLGGRDGFSGIAMTDFSTVFKGFTGGSSIADSLLSGGR.

The first 22 residues, 1–22 (MFVKLKLIFFFFLLCQIMISSS), serve as a signal peptide directing secretion. Residues 23–291 (QNLNFTYNGF…EPRRISEFYK (269 aa)) are Extracellular-facing. A legume-lectin like region spans residues 24 to 262 (NLNFTYNGFH…EHFLVGWSFR (239 aa)). N-linked (GlcNAc...) asparagine glycans are attached at residues asparagine 26, asparagine 57, asparagine 81, asparagine 128, asparagine 134, asparagine 171, asparagine 186, and asparagine 203. The chain crosses the membrane as a helical span at residues 292–312 (IGMPLISLSLIFSIIFLAFYI). Residues 313–677 (VRRKKKYEEE…IADSLLSGGR (365 aa)) are Cytoplasmic-facing. The Protein kinase domain maps to 347–625 (FKEKDLLGSG…LQYLRGDMAL (279 aa)). Residues 353–361 (LGSGGFGRV) and lysine 376 contribute to the ATP site. Aspartate 472 serves as the catalytic Proton acceptor.

It in the C-terminal section; belongs to the protein kinase superfamily. Ser/Thr protein kinase family. In the N-terminal section; belongs to the leguminous lectin family.

The protein localises to the cell membrane. It carries out the reaction L-seryl-[protein] + ATP = O-phospho-L-seryl-[protein] + ADP + H(+). It catalyses the reaction L-threonyl-[protein] + ATP = O-phospho-L-threonyl-[protein] + ADP + H(+). In terms of biological role, required during pollen development. Functionally, involved in resistance response to the pathogenic bacteria Pseudomonas syringae. The chain is L-type lectin-domain containing receptor kinase IV.2 from Arabidopsis thaliana (Mouse-ear cress).